A 797-amino-acid polypeptide reads, in one-letter code: Kinesin-like protein KIF18B (797 aa).

The Kinesin motor domain maps to 11-352 (TVAVVVRVRP…LKYANRAKEI (342 aa)). 110–117 (GATGAGKT) lines the ATP pocket. A coiled-coil region spans residues 367 to 402 (ISKYATICEQLKTEVADLQAKLRAYEDAARDAGKQI). Disordered stretches follow at residues 412-476 (EEAV…PNRL), 528-564 (AAVS…PSVP), 579-640 (LSSP…KEPQ), and 730-797 (KGSS…SGPR). Residues 594-608 (MSNTSRLETPHSLNT) show a composition bias toward polar residues. Positions 731–744 (GSSIPKPSSISKGS) are enriched in low complexity.

Belongs to the TRAFAC class myosin-kinesin ATPase superfamily. Kinesin family.

It is found in the nucleus. The protein localises to the cytoplasm. Its subcellular location is the cytoskeleton. May play an important role in microtubule plus-end depolymerizing activity in mitotic cells. This chain is Kinesin-like protein KIF18B (KIF18B), found in Gallus gallus (Chicken).